The chain runs to 595 residues: Tumor necrosis factor receptor superfamily member 8 (595 aa).

A signal peptide spans 1–18 (MRVLLAALGLLFLGALRA). Residues 19–385 (FPQDRPFEDT…STGKPVLDAG (367 aa)) are Extracellular-facing. 3 TNFR-Cys repeats span residues 28 to 66 (TCHGNPSHYYDKAVRRCCYRCPMGLFPTQQCPQRPTDCR), 68 to 106 (QCEPDYYLDEADRCTACVTCSRDDLVEKTPCAWNSSRVC), and 107 to 150 (ECRP…TVCE). Cystine bridges form between Cys-29–Cys-44, Cys-45–Cys-58, Cys-48–Cys-65, Cys-69–Cys-81, Cys-84–Cys-98, Cys-87–Cys-106, Cys-108–Cys-122, and Cys-131–Cys-149. Asn-32 is a glycosylation site (N-linked (GlcNAc...) asparagine). Asn-101 is a glycosylation site (N-linked (GlcNAc...) asparagine). The disordered stretch occupies residues 167–238 (KEPSSGTIPQ…PTQPCPEGSG (72 aa)). The segment covering 179-194 (PTPVSPATSSASTMPV) has biased composition (low complexity). TNFR-Cys repeat units lie at residues 205–241 (ASKLTRAPDSPSSVGRPSSDPGLSPTQPCPEGSGDCR), 243–281 (QCEPDYYLDEAGRCTACVSCSRDDLVEKTPCAWNSSRTC), and 282–325 (ECRP…TTFE). Disulfide bonds link Cys-233–Cys-240, Cys-244–Cys-256, Cys-259–Cys-273, Cys-262–Cys-281, Cys-283–Cys-297, and Cys-289–Cys-300. N-linked (GlcNAc...) asparagine glycosylation occurs at Asn-276. A disordered region spans residues 323–355 (TFEAPPLGTQPDCNPTPENGEAPASTSPTQSLL). N-linked (GlcNAc...) asparagine glycosylation occurs at Asn-336. A compositionally biased stretch (polar residues) spans 346–355 (ASTSPTQSLL). The chain crosses the membrane as a helical span at residues 386 to 406 (PVLFWVILVLVVVVGSSAFLL). At 407-595 (CHRRACRKRI…DPLPTAASGK (189 aa)) the chain is on the cytoplasmic side. 2 positions are modified to phosphoserine: Ser-438 and Ser-452. Disordered stretches follow at residues 438 to 457 (SRPRRSSTQLRSGASVTEPV), 485 to 509 (LQDASPAGGPSSPRDLPEPRVSTEH), and 536 to 595 (EGRG…ASGK). Over residues 443–452 (SSTQLRSGAS) the composition is skewed to polar residues. Positions 499 to 509 (DLPEPRVSTEH) are enriched in basic and acidic residues.

This sequence belongs to the TNFR8 family. As to quaternary structure, interacts with TRAF1, TRAF2, TRAF3 and TRAF5. Post-translationally, phosphorylated on serine and tyrosine residues. Isoform 2 is constitutively phosphorylated. Detected in alveolar macrophages (at protein level).

The protein localises to the cell membrane. It localises to the cytoplasm. Its function is as follows. Receptor for TNFSF8/CD30L. May play a role in the regulation of cellular growth and transformation of activated lymphoblasts. Regulates gene expression through activation of NF-kappa-B. This is Tumor necrosis factor receptor superfamily member 8 from Homo sapiens (Human).